Consider the following 843-residue polypeptide: Vacuolar membrane protease (843 aa).

Residues 1–16 (MTNSRRHIFERICAKA) are Cytoplasmic-facing. The chain crosses the membrane as a helical span at residues 17–37 (FQSSLTCSIFGFTVLLILYLL). The Vacuolar segment spans residues 38-347 (DWKRIAQVPG…LAFGKYWQLN (310 aa)). 3 N-linked (GlcNAc...) asparagine glycosylation sites follow: Asn-96, Asn-109, and Asn-117. Residues His-147 and Asp-159 each coordinate Zn(2+). The active-site Proton acceptor is the Glu-191. Residue Glu-192 coordinates Zn(2+). A glycan (N-linked (GlcNAc...) asparagine) is linked at Asn-209. Glu-217 contributes to the Zn(2+) binding site. Asn-275 carries an N-linked (GlcNAc...) asparagine glycan. His-292 is a Zn(2+) binding site. Asn-322 carries N-linked (GlcNAc...) asparagine glycosylation. Residues 348-368 (LPIYQVLNIIFAVICPIVLLL) form a helical membrane-spanning segment. Over 369-386 (TLIRFPSLYEQLKKPRYT) the chain is Cytoplasmic. A helical transmembrane segment spans residues 387 to 407 (VCFVVSCIFVSIFDTLTVLLL). At 408-417 (TWINPYVINS) the chain is on the vacuolar side. Residues 418–438 (HTGLILALFYLTNLIALAFSF) form a helical membrane-spanning segment. Topologically, residues 439–456 (RAAATHSKLSSEDLSSIE) are cytoplasmic. The chain crosses the membrane as a helical span at residues 457–477 (IVFIWYAQILWYLVFIVSVIL). At 478–484 (SIYFQLG) the chain is on the vacuolar side. The chain crosses the membrane as a helical span at residues 485–505 (STYWVTLSYLCTFTCCIMTII). At 506 to 566 (RINYFVDNVV…NRAHVKLIDN (61 aa)) the chain is on the cytoplasmic side. Residues 567–587 (IWTVIYFIFNVPFPVFLCYDI) form a helical membrane-spanning segment. At 588–608 (LVETILPAGSQTLTDSVFSSK) the chain is on the vacuolar side. A helical membrane pass occupies residues 609 to 629 (LYKLVIFVVFLSLVNSGPFIF). The Cytoplasmic portion of the chain corresponds to 630–636 (RALSKKS). Residues 637-657 (LAVLTMLWITLFVQALSVNPF) traverse the membrane as a helical segment. The Vacuolar portion of the chain corresponds to 658-843 (TESAPLKLSF…LLKVKSSIVI (186 aa)). N-linked (GlcNAc...) asparagine glycosylation is found at Asn-677, Asn-703, Asn-707, Asn-754, and Asn-788.

It belongs to the peptidase M28 family. Requires Zn(2+) as cofactor.

It is found in the membrane. It localises to the vacuole membrane. May be involved in vacuolar sorting and osmoregulation. The protein is Vacuolar membrane protease of Schizosaccharomyces pombe (strain 972 / ATCC 24843) (Fission yeast).